The sequence spans 140 residues: 3-hydroxyacyl-[acyl-carrier-protein] dehydratase FabZ (140 aa).

Histidine 47 is an active-site residue.

The protein belongs to the thioester dehydratase family. FabZ subfamily.

The protein resides in the cytoplasm. It catalyses the reaction a (3R)-hydroxyacyl-[ACP] = a (2E)-enoyl-[ACP] + H2O. Involved in unsaturated fatty acids biosynthesis. Catalyzes the dehydration of short chain beta-hydroxyacyl-ACPs and long chain saturated and unsaturated beta-hydroxyacyl-ACPs. In Streptococcus pyogenes serotype M49 (strain NZ131), this protein is 3-hydroxyacyl-[acyl-carrier-protein] dehydratase FabZ.